We begin with the raw amino-acid sequence, 729 residues long: Fatty acid oxidation complex subunit alpha (729 aa).

The segment at 1 to 189 (MLYKGDTLYL…KIGLVDGVVK (189 aa)) is enoyl-CoA hydratase/isomerase. D296 provides a ligand contact to substrate. Residues 311–729 (ETPKQAAVLG…ARPVGSLKTA (419 aa)) form a 3-hydroxyacyl-CoA dehydrogenase region. NAD(+)-binding positions include M324, D343, 400 to 402 (VVE), K407, and S429. H450 acts as the For 3-hydroxyacyl-CoA dehydrogenase activity in catalysis. N453 lines the NAD(+) pocket. Substrate is bound by residues N500 and Y660. Residues 708–729 (RHNEPYYPPVEPARPVGSLKTA) are disordered.

It in the N-terminal section; belongs to the enoyl-CoA hydratase/isomerase family. The protein in the C-terminal section; belongs to the 3-hydroxyacyl-CoA dehydrogenase family. Heterotetramer of two alpha chains (FadB) and two beta chains (FadA).

It catalyses the reaction a (3S)-3-hydroxyacyl-CoA + NAD(+) = a 3-oxoacyl-CoA + NADH + H(+). The catalysed reaction is a (3S)-3-hydroxyacyl-CoA = a (2E)-enoyl-CoA + H2O. It carries out the reaction a 4-saturated-(3S)-3-hydroxyacyl-CoA = a (3E)-enoyl-CoA + H2O. The enzyme catalyses (3S)-3-hydroxybutanoyl-CoA = (3R)-3-hydroxybutanoyl-CoA. It catalyses the reaction a (3Z)-enoyl-CoA = a 4-saturated (2E)-enoyl-CoA. The catalysed reaction is a (3E)-enoyl-CoA = a 4-saturated (2E)-enoyl-CoA. The protein operates within lipid metabolism; fatty acid beta-oxidation. Its function is as follows. Involved in the aerobic and anaerobic degradation of long-chain fatty acids via beta-oxidation cycle. Catalyzes the formation of 3-oxoacyl-CoA from enoyl-CoA via L-3-hydroxyacyl-CoA. It can also use D-3-hydroxyacyl-CoA and cis-3-enoyl-CoA as substrate. This chain is Fatty acid oxidation complex subunit alpha, found in Salmonella newport (strain SL254).